Here is a 335-residue protein sequence, read N- to C-terminus: Gibberellin 2-beta-dioxygenase 3 (335 aa).

A Fe2OG dioxygenase domain is found at 175–278 (ESDSCLRMNH…RISMIYFAGP (104 aa)). Residues H202, D204, and H259 each coordinate Fe cation. Residue R269 is part of the active site.

Belongs to the iron/ascorbate-dependent oxidoreductase family. GA2OX subfamily. It depends on Fe(2+) as a cofactor. As to expression, not expressed in the apex.

The enzyme catalyses gibberellin A1 + 2-oxoglutarate + O2 = gibberellin A8 + succinate + CO2. The protein operates within plant hormone biosynthesis; gibberellin biosynthesis. Catalyzes the 2-beta-hydroxylation of several biologically active gibberellins, leading to the homeostatic regulation of their endogenous level. Catabolism of gibberellins (GAs) plays a central role in plant development. Converts GA9/GA20 to GA51/GA29 and GA4/GA1 to GA34/GA8. In Arabidopsis thaliana (Mouse-ear cress), this protein is Gibberellin 2-beta-dioxygenase 3 (GA2OX3).